Here is a 488-residue protein sequence, read N- to C-terminus: Glutamyl-tRNA(Gln) amidotransferase subunit A (488 aa).

Residues Lys77 and Ser152 each act as charge relay system in the active site. The Acyl-ester intermediate role is filled by Ser176.

It belongs to the amidase family. GatA subfamily. As to quaternary structure, heterotrimer of A, B and C subunits.

It catalyses the reaction L-glutamyl-tRNA(Gln) + L-glutamine + ATP + H2O = L-glutaminyl-tRNA(Gln) + L-glutamate + ADP + phosphate + H(+). Its function is as follows. Allows the formation of correctly charged Gln-tRNA(Gln) through the transamidation of misacylated Glu-tRNA(Gln) in organisms which lack glutaminyl-tRNA synthetase. The reaction takes place in the presence of glutamine and ATP through an activated gamma-phospho-Glu-tRNA(Gln). In Streptococcus pneumoniae serotype 19F (strain G54), this protein is Glutamyl-tRNA(Gln) amidotransferase subunit A.